The following is a 78-amino-acid chain: Large ribosomal subunit protein bL28 (78 aa).

The disordered stretch occupies residues 1–21 (MARVCQVTGKGPMTGNNVSHA).

The protein belongs to the bacterial ribosomal protein bL28 family.

The protein is Large ribosomal subunit protein bL28 of Bordetella petrii (strain ATCC BAA-461 / DSM 12804 / CCUG 43448).